Reading from the N-terminus, the 868-residue chain is Monofunctional pimaradiene synthase (868 aa).

Mg(2+) contacts are provided by Asp620, Asp624, Asn764, Thr768, and Glu772.

This sequence belongs to the terpene synthase family. Tpsd subfamily. Mg(2+) is required as a cofactor.

It catalyses the reaction (+)-copalyl diphosphate = (-)-pimara-8(14),15-diene + diphosphate. It participates in terpene metabolism; oleoresin biosynthesis. Its function is as follows. Involved in defensive oleoresin formation in conifers in response to insect attack or other injury. Involved in diterpene (C20) olefins biosynthesis. Monofunctional enzyme lacking the DXDD motif in the class II active site relevant for the cyclization of geranylgeranyl diphosphate (GGPP). Requires (+)-copalyl diphosphate ((+)-CPP) as substrate, but no activity with GGPP or ent-CPP. Pimaradiene is the major products of the enzyme. The chain is Monofunctional pimaradiene synthase from Pinus banksiana (Jack pine).